Here is a 96-residue protein sequence, read N- to C-terminus: Large ribosomal subunit protein uL23 (96 aa).

It belongs to the universal ribosomal protein uL23 family. As to quaternary structure, part of the 50S ribosomal subunit. Contacts protein L29, and trigger factor when it is bound to the ribosome.

One of the early assembly proteins it binds 23S rRNA. One of the proteins that surrounds the polypeptide exit tunnel on the outside of the ribosome. Forms the main docking site for trigger factor binding to the ribosome. This chain is Large ribosomal subunit protein uL23, found in Brevibacillus brevis (strain 47 / JCM 6285 / NBRC 100599).